A 295-amino-acid chain; its full sequence is ATP synthase gamma chain (295 aa).

The protein belongs to the ATPase gamma chain family. In terms of assembly, F-type ATPases have 2 components, CF(1) - the catalytic core - and CF(0) - the membrane proton channel. CF(1) has five subunits: alpha(3), beta(3), gamma(1), delta(1), epsilon(1). CF(0) has three main subunits: a, b and c.

Its subcellular location is the cell inner membrane. Functionally, produces ATP from ADP in the presence of a proton gradient across the membrane. The gamma chain is believed to be important in regulating ATPase activity and the flow of protons through the CF(0) complex. The sequence is that of ATP synthase gamma chain from Aliarcobacter butzleri (strain RM4018) (Arcobacter butzleri).